The following is a 142-amino-acid chain: MKTFTAKPETVKRDWYVVDATGKTLGRLATELARRLRGKHKAEYTPHVDTGDYIIVLNADKVAVTGNKCTDKVYYHHTGHIGGIKQATFEEMIARRPERVIEIAVKGMLPKGPLGRAMFRKLKVYAGNEHNHAAQQPQVLDI.

The protein belongs to the universal ribosomal protein uL13 family. Part of the 50S ribosomal subunit.

Its function is as follows. This protein is one of the early assembly proteins of the 50S ribosomal subunit, although it is not seen to bind rRNA by itself. It is important during the early stages of 50S assembly. In Shigella boydii serotype 18 (strain CDC 3083-94 / BS512), this protein is Large ribosomal subunit protein uL13.